A 329-amino-acid chain; its full sequence is Carbonic anhydrase (329 aa).

Residues 1–108 form a chloroplast transit peptide-like region; the sequence is MSTASAFAIN…AAARIDQITA (108 aa).

Belongs to the beta-class carbonic anhydrase family. In terms of assembly, homohexamer.

The protein resides in the cytoplasm. The catalysed reaction is hydrogencarbonate + H(+) = CO2 + H2O. Functionally, reversible hydration of carbon dioxide. This Flaveria pringlei protein is Carbonic anhydrase.